Reading from the N-terminus, the 2620-residue chain is Ubiquitin carboxyl-terminal hydrolase 24 (2620 aa).

The UBA domain maps to 3–44 (SEEEQHMTTLLCMGFSDPATIRKALRLAKNDINEAVALLTNE). The interval 45-102 (RPGLDYGGYEPMDSGGGPSPGPGGGPRGDGGGDGGGGGPSRGGSTGGGGGFDPPPAYH) is disordered. Positions 58-95 (SGGGPSPGPGGGPRGDGGGDGGGGGPSRGGSTGGGGGF) are enriched in gly residues. Phosphoserine occurs at positions 63 and 88. Phosphotyrosine is present on Y942. Disordered regions lie at residues 1034 to 1054 (TSGS…SSSS) and 1129 to 1151 (TLLS…QQHQ). A compositionally biased stretch (low complexity) spans 1131 to 1151 (LSESSSQSSKSPSLSSKQQHQ). 2 positions are modified to phosphoserine: S1141 and S1285. Positions 1689–2042 (VGLRNGGATC…NAYMLFYQRV (354 aa)) constitute a USP domain. The active-site Nucleophile is the C1698. A disordered region spans residues 1921–1945 (ARQDSSSEVGENGRSVDQGGGGSPR). Residue S1943 is modified to Phosphoserine. H1970 (proton acceptor) is an active-site residue. 3 positions are modified to phosphoserine: S2047, S2077, and S2561. Residues 2063–2090 (AEDLSLSAPSSPEISPQSSPRPHRPNND) form a disordered region. The span at 2069–2082 (SAPSSPEISPQSSP) shows a compositional bias: low complexity. At T2565 the chain carries Phosphothreonine. The tract at residues 2575-2620 (EKEQSGSSNGSESSPANENGDRHLQQGSESPMMIGELRSDLDDVDP) is disordered. Low complexity predominate over residues 2579–2592 (SGSSNGSESSPANE). Position 2604 is a phosphoserine (S2604). Residues 2611-2620 (LRSDLDDVDP) are compositionally biased toward basic and acidic residues.

Belongs to the peptidase C19 family. In terms of assembly, (Microbial infection) Interacts with human cytomegalovirus protein UL38.

It carries out the reaction Thiol-dependent hydrolysis of ester, thioester, amide, peptide and isopeptide bonds formed by the C-terminal Gly of ubiquitin (a 76-residue protein attached to proteins as an intracellular targeting signal).. Ubiquitin-specific protease that regulates cell survival in various contexts through modulating the protein stability of some of its substrates including DDB2, MCL1 or TP53. Plays a positive role on ferritinophagy where ferritin is degraded in lysosomes and releases free iron. This chain is Ubiquitin carboxyl-terminal hydrolase 24 (USP24), found in Homo sapiens (Human).